We begin with the raw amino-acid sequence, 48 residues long: MDIIGSGFIRFKYNYIIIIIINIIPELMPLKSVNFLIITSLYAWKIPK.

The protein localises to the mitochondrion. This is an uncharacterized protein from Emericella nidulans (Aspergillus nidulans).